Reading from the N-terminus, the 529-residue chain is Glucocorticoid modulatory element-binding protein 2 (529 aa).

Residues 80-162 (EEGENLEAEI…RKIMDSGELD (83 aa)) enclose the SAND domain. Residue C109 participates in Zn(2+) binding. The DNA site is built by K135, K139, K142, and R153. K154 is covalently cross-linked (Glycyl lysine isopeptide (Lys-Gly) (interchain with G-Cter in SUMO1); alternate). A Glycyl lysine isopeptide (Lys-Gly) (interchain with G-Cter in SUMO2); alternate cross-link involves residue K154. Residues H166, C170, and C174 each coordinate Zn(2+). Residues 244-347 (LLDEVIQEFQ…HLSNVLMTLT (104 aa)) adopt a coiled-coil conformation. Residue S372 is modified to Phosphoserine.

Homodimer, and heterodimer of GMEB1 and GMEB2. Interacts with the glucocorticoid receptor (NR3C1). May interact with CREB-binding protein (CBP).

The protein localises to the nucleus. It is found in the cytoplasm. Functionally, trans-acting factor that binds to glucocorticoid modulatory elements (GME) present in the TAT (tyrosine aminotransferase) promoter and increases sensitivity to low concentrations of glucocorticoids. Also binds to the transferrin receptor promoter. The chain is Glucocorticoid modulatory element-binding protein 2 (Gmeb2) from Rattus norvegicus (Rat).